Here is a 558-residue protein sequence, read N- to C-terminus: Laccase-4 (558 aa).

A signal peptide spans 1 to 24; that stretch reads MGSHMVWFLFLVSFFSVFPAPSES. 2 consecutive Plastocyanin-like domains span residues 32-148 and 158-308; these read NVVM…PKRG and NEKV…YSGT. N-linked (GlcNAc...) asparagine glycans are attached at residues Asn-37 and Asn-78. Residues His-82 and His-84 each contribute to the Cu cation site. An N-linked (GlcNAc...) asparagine glycan is attached at Asn-114. His-127 and His-129 together coordinate Cu cation. Asn-187, Asn-296, Asn-323, Asn-330, Asn-373, Asn-383, Asn-400, Asn-418, and Asn-441 each carry an N-linked (GlcNAc...) asparagine glycan. The 135-residue stretch at 408-542 folds into the Plastocyanin-like 3 domain; the sequence is DFPKNPPHVF…KMAFLVENGK (135 aa). Cu cation-binding residues include His-459, His-462, and His-464. Asn-479 carries an N-linked (GlcNAc...) asparagine glycan. His-521, Cys-522, His-523, and His-527 together coordinate Cu cation. Asn-545 carries an N-linked (GlcNAc...) asparagine glycan.

Belongs to the multicopper oxidase family. Cu cation is required as a cofactor. Ubiquitous, with higher levels in the inflorescence stem.

It localises to the secreted. Its subcellular location is the extracellular space. The protein resides in the apoplast. The catalysed reaction is 4 hydroquinone + O2 = 4 benzosemiquinone + 2 H2O. In terms of biological role, lignin degradation and detoxification of lignin-derived products. Required for secondary xylem cell wall lignification. The chain is Laccase-4 (IRX12) from Arabidopsis thaliana (Mouse-ear cress).